Here is a 230-residue protein sequence, read N- to C-terminus: Somatolactin (230 aa).

The first 23 residues, 1–23, serve as a signal peptide directing secretion; it reads MKKTTVLQVCMVFVVCSLQAVIG. Disulfide bonds link cysteine 28–cysteine 38, cysteine 87–cysteine 202, and cysteine 219–cysteine 227. Asparagine 226 carries N-linked (GlcNAc...) asparagine glycosylation.

It belongs to the somatotropin/prolactin family.

It localises to the secreted. The chain is Somatolactin from Carassius auratus (Goldfish).